The following is a 447-amino-acid chain: N-succinylarginine dihydrolase (447 aa).

Residues 19–28 (AGLSFGNEAS), Asn110, and 137–138 (HR) contribute to the substrate site. Residue Glu174 is part of the active site. Arg212 is a substrate binding site. The active site involves His248. The substrate site is built by Asp250 and Asn359. Cys365 (nucleophile) is an active-site residue.

This sequence belongs to the succinylarginine dihydrolase family. Homodimer.

The catalysed reaction is N(2)-succinyl-L-arginine + 2 H2O + 2 H(+) = N(2)-succinyl-L-ornithine + 2 NH4(+) + CO2. Its pathway is amino-acid degradation; L-arginine degradation via AST pathway; L-glutamate and succinate from L-arginine: step 2/5. Its function is as follows. Catalyzes the hydrolysis of N(2)-succinylarginine into N(2)-succinylornithine, ammonia and CO(2). The sequence is that of N-succinylarginine dihydrolase from Salmonella typhi.